The sequence spans 85 residues: Homeobox protein liguleless 3 (85 aa).

Residues 1-21 (ELKEMLLKKYSGCLSRLRSEF) form the ELK domain. The segment at residues 22–85 (LKKRKKGKLP…NQRKRHWKPS (64 aa)) is a DNA-binding region (homeobox; TALE-type).

It belongs to the TALE/KNOX homeobox family.

Its subcellular location is the nucleus. Probably binds to the DNA sequence 5'-TGAC-3'. In Zea mays (Maize), this protein is Homeobox protein liguleless 3 (LG3).